Consider the following 284-residue polypeptide: uncharacterized protein (284 aa).

The protein belongs to the methyltransferase superfamily.

Its subcellular location is the cytoplasm. It is found in the nucleus. Its function is as follows. Probable methyltransferase. This is an uncharacterized protein from Schizosaccharomyces pombe (strain 972 / ATCC 24843) (Fission yeast).